Consider the following 491-residue polypeptide: Maintenance of mitochondrial morphology protein 1 (491 aa).

Over 1 to 22 the chain is Lumenal; that stretch reads MTFQQNEPSAVPAQSSLSFTQG. A helical transmembrane segment spans residues 23–43; it reads FLLGQLSVVLLIGAFIKFFIF. Residues 44-491 are Cytoplasmic-facing; the sequence is GEAPPPPSRG…GTLPGGAAAN (448 aa). Disordered stretches follow at residues 50 to 95, 275 to 325, and 392 to 491; these read PSRG…PVPS, PPLH…SPKS, and RTGV…AAAN. A compositionally biased stretch (basic residues) spans 54–64; it reads LSHRASTHRRS. 2 stretches are compositionally biased toward polar residues: residues 65–78 and 85–95; these read NSIYTINPNEGTSR and STSNVLRPVPS. Residues 131–384 enclose the SMP-LTD domain; that stretch reads QPESLDWFNV…EPRVQVVGLP (254 aa). Pro residues predominate over residues 275–287; it reads PPLHTPSPSPSPP. 2 stretches are compositionally biased toward polar residues: residues 300–315 and 403–412; these read TNGSREPTQEAPNAQE and TGSNAASRSA. Residues 422–434 show a composition bias toward basic and acidic residues; it reads RADDIGREPDGLR.

Belongs to the MMM1 family. Homodimer. Component of the ER-mitochondria encounter structure (ERMES) or MDM complex, composed of mmm1, mdm10, mdm12 and mdm34. A mmm1 homodimer associates with one molecule of mdm12 on each side in a pairwise head-to-tail manner, and the SMP-LTD domains of mmm1 and mdm12 generate a continuous hydrophobic tunnel for phospholipid trafficking.

It localises to the endoplasmic reticulum membrane. Component of the ERMES/MDM complex, which serves as a molecular tether to connect the endoplasmic reticulum (ER) and mitochondria. Components of this complex are involved in the control of mitochondrial shape and protein biogenesis, and function in nonvesicular lipid trafficking between the ER and mitochondria. The mdm12-mmm1 subcomplex functions in the major beta-barrel assembly pathway that is responsible for biogenesis of all outer membrane beta-barrel proteins, and acts in a late step after the SAM complex. The mdm10-mdm12-mmm1 subcomplex further acts in the TOM40-specific pathway after the action of the mdm12-mmm1 complex. Essential for establishing and maintaining the structure of mitochondria and maintenance of mtDNA nucleoids. This Aspergillus flavus (strain ATCC 200026 / FGSC A1120 / IAM 13836 / NRRL 3357 / JCM 12722 / SRRC 167) protein is Maintenance of mitochondrial morphology protein 1.